Consider the following 355-residue polypeptide: F-box only protein 32 (355 aa).

The short motif at 62-67 is the Nuclear localization signal element; the sequence is KKRKKD. A Nuclear export signal motif is present at residues 169-173; it reads LLQTL. An F-box domain is found at 223–271; that stretch reads LTFTDLPLCLQLNIMQRLSDGRDLVSLGQVAPDLHVLSEDRLLWKKLCQ. The short motif at 280–295 is the Bipartite nuclear localization signal element; the sequence is RKRLILSDKGQLDWKK.

In terms of assembly, part of the SCF (SKP1-CUL1-F-box) E3 ubiquitin-protein ligase complex SCF(FBXO32) formed of CUL1, SKP1, RBX1 and FBXO32.

It is found in the cytoplasm. It localises to the nucleus. It participates in protein modification; protein ubiquitination. In terms of biological role, substrate recognition component of a SCF (SKP1-CUL1-F-box protein) E3 ubiquitin-protein ligase complex which mediates the ubiquitination and subsequent proteasomal degradation of target proteins. Probably recognizes and binds to phosphorylated target proteins during skeletal muscle atrophy. Recognizes TERF1. The protein is F-box only protein 32 (FBXO32) of Bos taurus (Bovine).